Here is a 329-residue protein sequence, read N- to C-terminus: Phenylalanine--tRNA ligase alpha subunit (329 aa).

A Mg(2+)-binding site is contributed by Glu254.

It belongs to the class-II aminoacyl-tRNA synthetase family. Phe-tRNA synthetase alpha subunit type 1 subfamily. In terms of assembly, tetramer of two alpha and two beta subunits. It depends on Mg(2+) as a cofactor.

It localises to the cytoplasm. It carries out the reaction tRNA(Phe) + L-phenylalanine + ATP = L-phenylalanyl-tRNA(Phe) + AMP + diphosphate + H(+). This chain is Phenylalanine--tRNA ligase alpha subunit, found in Mannheimia succiniciproducens (strain KCTC 0769BP / MBEL55E).